A 137-amino-acid chain; its full sequence is ATP synthase epsilon chain, sodium ion specific (137 aa).

This sequence belongs to the ATPase epsilon chain family. As to quaternary structure, F-type ATPases have 2 components, CF(1) - the catalytic core - and CF(0) - the membrane proton channel. CF(1) has five subunits: alpha(3), beta(3), gamma(1), delta(1), epsilon(1). CF(0) has three main subunits: a, b and c.

It is found in the cell inner membrane. Functionally, produces ATP from ADP in the presence of a sodium gradient across the membrane. This is ATP synthase epsilon chain, sodium ion specific (atpC) from Propionigenium modestum.